Consider the following 732-residue polypeptide: MKCRFEFEMNNLKEIYEFGEVAKQTNGSVLLKSGKTVMLATVVMEKEMVDEDFLPLTVQYIEKSYAAGKIPGGFVKREQKPGDFETLTARIVDRALRPLFPKGYLYPTVITVMVLSADPESDLQVLALNAASAALFVSDIPVRKAVSGLRVAKVDGEVLFNPPLSKLKESTLDLYLAGTKEELLMIEMAAIGSYKTEVVPTTVDPLMDPTLAEEVITIKEPNAMKEEELASIIAQGKDVIQIACNEYEKYFIESAKEQLELELLPQTIDEDIWTYVEEIYAADIKEAVQAMAKSERNELLKEIAKKISEDDVAKEQGWEYETIYKVVEKYKRKIVREMILNEGKRADGRGLKDVRPIDIKTNILPSAHGSCLFTRGETQALVVCTIGEKTDAQMYEMLTSKGPEYEHFMVHYNFPPFSVGEAKPISAPGRRELGHGNLARRALEPVVDVPEDKTYRLVSEILESNGSSSMATVCGGALALKAANIDLADLVAGVAMGLIVEDDKYAILTDIMGLEDHDGDMDFKVAGTHDGVTAMQMDIKLGGVQQEILEQALQQAREARLHILKIMEEAAEKIEINEENLPSSHTITVHPSKIVDIIGQAGKTIKEIIEKFEVSIDIDRDKGKVKVTGKNRPKVIAACDYIQEITNKPKPEPVKFQEGDILKGKIKRTTNFGAFVELPGGVDGLLHISKLSSGRVERVEDVVNIGDEVEVEVLSQKGHKIELGLRQVLKKA.

2 residues coordinate Mg(2+): Asp516 and Asp522. Positions 582 to 642 constitute a KH domain; sequence PSSHTITVHP…PKVIAACDYI (61 aa). One can recognise an S1 motif domain in the interval 659-726; sequence GDILKGKIKR…KGHKIELGLR (68 aa).

Belongs to the polyribonucleotide nucleotidyltransferase family. It depends on Mg(2+) as a cofactor.

Its subcellular location is the cytoplasm. It carries out the reaction RNA(n+1) + phosphate = RNA(n) + a ribonucleoside 5'-diphosphate. Its function is as follows. Involved in mRNA degradation. Catalyzes the phosphorolysis of single-stranded polyribonucleotides processively in the 3'- to 5'-direction. The sequence is that of Polyribonucleotide nucleotidyltransferase from Nitratiruptor sp. (strain SB155-2).